A 430-amino-acid chain; its full sequence is Glutamate-1-semialdehyde 2,1-aminomutase 2 (430 aa).

Residue lysine 269 is modified to N6-(pyridoxal phosphate)lysine.

This sequence belongs to the class-III pyridoxal-phosphate-dependent aminotransferase family. HemL subfamily. Homodimer. It depends on pyridoxal 5'-phosphate as a cofactor.

The protein localises to the cytoplasm. It catalyses the reaction (S)-4-amino-5-oxopentanoate = 5-aminolevulinate. It functions in the pathway porphyrin-containing compound metabolism; protoporphyrin-IX biosynthesis; 5-aminolevulinate from L-glutamyl-tRNA(Glu): step 2/2. In Bacillus pumilus (strain SAFR-032), this protein is Glutamate-1-semialdehyde 2,1-aminomutase 2.